We begin with the raw amino-acid sequence, 137 residues long: uncharacterized protein (137 aa).

In terms of domain architecture, Sm spans 30–105 (SLLCVFTALR…IRFIQIPDKI (76 aa)).

This is an uncharacterized protein from Dictyostelium discoideum (Social amoeba).